Here is a 1311-residue protein sequence, read N- to C-terminus: DENN domain-containing protein 5B (1311 aa).

The 218-residue stretch at 53–270 (ATAAGENFDQ…EVPLPASGRS (218 aa)) folds into the uDENN domain. Residues 154-165 (QAEHNTSAQNCT) are compositionally biased toward polar residues. Residues 154 to 201 (QAEHNTSAQNCTSSSSSSSSSSSSSSMDSLSSSLDDVDSPSAHGGRRT) are disordered. Residues 166–187 (SSSSSSSSSSSSSSMDSLSSSL) show a composition bias toward low complexity. The region spanning 289–452 (ELPLADFPLA…AVMSLQTSVL (164 aa)) is the cDENN domain. The 166-residue stretch at 454–619 (KELKSTSLRE…DNKIMSQWEE (166 aa)) folds into the dDENN domain. Residues 809–969 (LEENTLIASL…DYFCFTSVFT (161 aa)) enclose the RUN 1 domain. The segment at 854–874 (EQQLESPVSNGQERRKTESSV) is disordered. The helical transmembrane segment at 962-982 (FCFTSVFTTIMIPYRAVIIPI) threads the bilayer. One can recognise a PLAT domain in the interval 973-1081 (IPYRAVIIPI…DDGSLERVLI (109 aa)). In terms of domain architecture, RUN 2 spans 1155–1306 (TVLLCGEGGL…FPITLETSLT (152 aa)).

It belongs to the RAB6IP1 family.

It localises to the membrane. In terms of biological role, guanine nucleotide exchange factor (GEF) which may activate the small GTPases Rab. May promote the exchange of GDP to GTP, converting inactive GDP-bound Rab proteins into their active GTP-bound form. This is DENN domain-containing protein 5B (dennd5b) from Danio rerio (Zebrafish).